A 514-amino-acid chain; its full sequence is G-protein coupled receptor Mth (514 aa).

The N-terminal stretch at 1-24 is a signal peptide; sequence MKTLLVLRISTVILVVLVIQKSYA. Over 25–218 the chain is Extracellular; sequence DILECDYFDT…CLIVPSITGQ (194 aa). Cystine bridges form between C29–C83, C85–C90, C94–C188, C95–C106, and C150–C209. N45 is a glycosylation site (N-linked (GlcNAc...) asparagine). 4 N-linked (GlcNAc...) asparagine glycosylation sites follow: N109, N123, N170, and N198. The helical transmembrane segment at 219–239 threads the bilayer; the sequence is TVVMISSLICMVLTIAVYLFV. Topologically, residues 240–248 are cytoplasmic; that stretch reads KKLQNLHGK. A helical membrane pass occupies residues 249–269; it reads CFICYMVCLFMGYLFLLLDLW. Topologically, residues 270 to 278 are extracellular; it reads QISISFCKP. A helical transmembrane segment spans residues 279-299; that stretch reads AGFLGYFFVMAAFFWLSVISL. At 300 to 320 the chain is on the cytoplasmic side; that stretch reads HLWNTFRGSSHKANRFLFEHR. The helical transmembrane segment at 321-341 threads the bilayer; the sequence is FLAYNTYAWGMAVVLTGITVL. The Extracellular portion of the chain corresponds to 342–370; the sequence is ADNIVENQDWNPRVGHEGHCWIYTQAWSA. The chain crosses the membrane as a helical span at residues 371-391; it reads MLYFYGPMVFLIAFNITMFIL. Topologically, residues 392–424 are cytoplasmic; sequence TAKRILGVKKDIQNFAHRQERKQKLNSDKQTYT. A helical membrane pass occupies residues 425 to 445; the sequence is FFLRLFIIMGLSWSLEIGSYF. Residues 446–454 are Extracellular-facing; that stretch reads SQSNQTWAN. A glycan (N-linked (GlcNAc...) asparagine) is linked at N449. Residues 455–475 traverse the membrane as a helical segment; it reads VFLVADYLNWSQGIIIFILFV. Residues 476-514 lie on the Cytoplasmic side of the membrane; the sequence is LKRSTWRLLQESIRGEGEEVNNSEEEISLENTTTRNVLL.

The protein belongs to the G-protein coupled receptor 2 family. Mth subfamily. Homodimer.

The protein localises to the cell membrane. In terms of biological role, involved in biological aging and stress response. Essential for adult survival. Required in the presynaptic motor neuron to up-regulate neurotransmitter exocytosis at larval glutamatergic neuromuscular junctions (NMJs). Regulates a step associated with docking and clustering of vesicles at release sites. SP/Acp70A and sun are agonists that activate mth in vitro. The polypeptide is G-protein coupled receptor Mth (mth) (Drosophila melanogaster (Fruit fly)).